The following is a 2388-amino-acid chain: Highly reducing polyketide synthase Preu1 (2388 aa).

Positions 7-432 (NDDIAIVGLA…GTNAHVILDD (426 aa)) constitute a Ketosynthase family 3 (KS3) domain. Residues Cys180, His315, and His355 each act as for beta-ketoacyl synthase activity in the active site. Residues 549-875 (GFVFTGQGAQ…SSVLMRGEDG (327 aa)) are malonyl-CoA:ACP transacylase (MAT) domain. Ser641 serves as the catalytic For malonyltransferase activity. The tract at residues 940–1074 (HDLLGAPTQD…GLGKIHYRPE (135 aa)) is N-terminal hotdog fold. Residues 940 to 1256 (HDLLGAPTQD…CRELPNGNSQ (317 aa)) form the PKS/mFAS DH domain. The segment at 941–1251 (DLLGAPTQDS…VEGLRCRELP (311 aa)) is dehydratase (DH) domain. Catalysis depends on His972, which acts as the Proton acceptor; for dehydratase activity. The segment at 1102-1256 (TASISPVDFY…CRELPNGNSQ (155 aa)) is C-terminal hotdog fold. The Proton donor; for dehydratase activity role is filled by Asp1167. The segment at 1676–1983 (KLPSDARFTS…VPTGLGKAVL (308 aa)) is enoyl reductase (ER) domain. Residues 2007-2191 (ATYVLAGGLG…AATSVDLGLM (185 aa)) are ketoreductase (KR) domain. A Carrier domain is found at 2303–2380 (QANGIVLEAL…ALAEKISKAS (78 aa)). Ser2340 carries the O-(pantetheine 4'-phosphoryl)serine modification.

Pantetheine 4'-phosphate is required as a cofactor.

Its function is as follows. Highly reducing polyketide synthase; part of a gene cluster that mediates the biosynthesis of a yet unidentified natural product. The polypeptide is Highly reducing polyketide synthase Preu1 (Preussia isomera (Coprophilous fungus)).